A 233-amino-acid polypeptide reads, in one-letter code: uncharacterized protein (233 aa).

This is an uncharacterized protein from Bacillus subtilis (strain 168).